A 395-amino-acid polypeptide reads, in one-letter code: Chorismate synthase (395 aa).

Positions 40 and 46 each coordinate NADP(+). Residues 135–137 and 256–257 contribute to the FMN site; these read RAS and QA. The span at 272–283 shows a compositional bias: basic and acidic residues; it reads RRGSQAHDEMRP. Residues 272-296 are disordered; sequence RRGSQAHDEMRPGPDGILRSTNRAG. Residues Gly300, 315 to 319, and Arg341 contribute to the FMN site; that span reads KPIST.

This sequence belongs to the chorismate synthase family. As to quaternary structure, homotetramer. Requires FMNH2 as cofactor.

The catalysed reaction is 5-O-(1-carboxyvinyl)-3-phosphoshikimate = chorismate + phosphate. It functions in the pathway metabolic intermediate biosynthesis; chorismate biosynthesis; chorismate from D-erythrose 4-phosphate and phosphoenolpyruvate: step 7/7. Catalyzes the anti-1,4-elimination of the C-3 phosphate and the C-6 proR hydrogen from 5-enolpyruvylshikimate-3-phosphate (EPSP) to yield chorismate, which is the branch point compound that serves as the starting substrate for the three terminal pathways of aromatic amino acid biosynthesis. This reaction introduces a second double bond into the aromatic ring system. The protein is Chorismate synthase of Rhodococcus jostii (strain RHA1).